The following is a 397-amino-acid chain: Dimethyladenosine transferase 2, mitochondrial (397 aa).

The N-terminal 44 residues, 1-44 (MRGLAMRLPPRLALSVLAGRGPSCILGSGAATRKDWQERNRRSF), are a transit peptide targeting the mitochondrion. S-adenosyl-L-methionine contacts are provided by Ile75, Glu124, and Asp150. The tract at residues 329-330 (KR) is DNA-binding.

The protein belongs to the class I-like SAM-binding methyltransferase superfamily. rRNA adenine N(6)-methyltransferase family. KsgA subfamily. In terms of assembly, homodimer. Component of the mitochondrial transcription initiation complex, composed at least of TFB2M, TFAM and POLRMT. In this complex TFAM recruits POLRMT to the promoter whereas TFB2M induces structural changes in POLRMT to enable promoter opening and trapping of the DNA non-template strand. Interacts with mitochondrial RNA polymerase POLRMT. Interacts with TFAM.

The protein resides in the mitochondrion. The enzyme catalyses adenosine in rRNA + S-adenosyl-L-methionine = N(6)-methyladenosine in rRNA + S-adenosyl-L-homocysteine + H(+). S-adenosyl-L-methionine-dependent rRNA methyltransferase which may methylate two specific adjacent adenosines in the loop of a conserved hairpin near the 3'-end of 12S mitochondrial rRNA. Component of the mitochondrial transcription initiation complex, composed at least of TFB2M, TFAM and POLRMT that is required for basal transcription of mitochondrial DNA. In this complex TFAM recruits POLRMT to a specific promoter whereas TFB2M induces structural changes in POLRMT to enable promoter opening and trapping of the DNA non-template strand. Stimulates transcription independently of the methyltransferase activity. The chain is Dimethyladenosine transferase 2, mitochondrial from Rattus norvegicus (Rat).